We begin with the raw amino-acid sequence, 358 residues long: Alanine racemase (358 aa).

Catalysis depends on Lys35, which acts as the Proton acceptor; specific for D-alanine. An N6-(pyridoxal phosphate)lysine modification is found at Lys35. Arg130 lines the substrate pocket. The Proton acceptor; specific for L-alanine role is filled by Tyr255. Met303 contacts substrate.

Belongs to the alanine racemase family. It depends on pyridoxal 5'-phosphate as a cofactor.

It carries out the reaction L-alanine = D-alanine. Its pathway is amino-acid biosynthesis; D-alanine biosynthesis; D-alanine from L-alanine: step 1/1. Catalyzes the interconversion of L-alanine and D-alanine. May also act on other amino acids. The sequence is that of Alanine racemase (alr) from Shewanella sediminis (strain HAW-EB3).